Consider the following 369-residue polypeptide: Core histone macro-H2A.1 (369 aa).

The Histone H2A domain maps to 2–117 (SSRGGKKKST…NIHPELLAKK (116 aa)). Lysine 7 and lysine 9 each carry N6-lactoyllysine; alternate. Lysine 18 is modified (N6-methyllysine). Lysine 116 bears the N6-acetyllysine; alternate mark. Residue lysine 116 forms a Glycyl lysine isopeptide (Lys-Gly) (interchain with G-Cter in ubiquitin); alternate linkage. Residue lysine 117 forms a Glycyl lysine isopeptide (Lys-Gly) (interchain with G-Cter in ubiquitin) linkage. At lysine 123 the chain carries N6-acetyllysine; alternate. Residue lysine 123 is modified to N6,N6-dimethyllysine; alternate. Residue lysine 123 forms a Glycyl lysine isopeptide (Lys-Gly) (interchain with G-Cter in SUMO2); alternate linkage. The interval 128-180 (ITPPPAKKAKSPSQKKPVSKKAGGKKGARKSKKKQGEVSKAASADSTTEGTPA) is disordered. The residue at position 129 (threonine 129) is a Phosphothreonine. The span at 144–160 (PVSKKAGGKKGARKSKK) shows a compositional bias: basic residues. Residue lysine 167 forms a Glycyl lysine isopeptide (Lys-Gly) (interchain with G-Cter in SUMO2) linkage. 2 positions are modified to phosphoserine: serine 170 and serine 173. Threonine 178 bears the Phosphothreonine mark. The region spanning 184–367 (TVLSTKSLFL…IYVQEMAKLD (184 aa)) is the Macro domain. Lysine 189 is covalently cross-linked (Glycyl lysine isopeptide (Lys-Gly) (interchain with G-Cter in SUMO2)). Positions 203, 204, 226, 275, 312, 313, 314, and 316 each coordinate a glycoprotein. Lysine 320 is covalently cross-linked (Glycyl lysine isopeptide (Lys-Gly) (interchain with G-Cter in SUMO2)).

It belongs to the histone H2A family. As to quaternary structure, the nucleosome is a histone octamer containing two molecules each of H2A, H2B, H3 and H4 assembled in one H3-H4 heterotetramer and two H2A-H2B heterodimers. Interacts with HDAC1 and HDAC2. Interacts with SPOP. Part of a complex consisting of MACROH2A1, CUL3 and SPOP. Interacts with PARP1. Post-translationally, monoubiquitinated at either Lys-116 or Lys-117. May also be polyubiquitinated. Ubiquitination is mediated by the CUL3/SPOP E3 complex and does not promote proteasomal degradation. Instead, it is required for enrichment in inactive X chromosome chromatin. In terms of tissue distribution, widely expressed.

The protein localises to the nucleus. The protein resides in the chromosome. Variant histone H2A which replaces conventional H2A in a subset of nucleosomes where it represses transcription. Nucleosomes wrap and compact DNA into chromatin, limiting DNA accessibility to the cellular machineries which require DNA as a template. Histones thereby play a central role in transcription regulation, DNA repair, DNA replication and chromosomal stability. DNA accessibility is regulated via a complex set of post-translational modifications of histones, also called histone code, and nucleosome remodeling. Involved in stable X chromosome inactivation. Inhibits the binding of transcription factors, including NF-kappa-B, and interferes with the activity of remodeling SWI/SNF complexes. Inhibits histone acetylation by EP300 and recruits class I HDACs, which induces a hypoacetylated state of chromatin. Its function is as follows. Isoform that specifically binds poly-ADP-ribose and O-acetyl-ADP-ribose and plays a key role in NAD(+) metabolism. Able to bind to the ends of poly-ADP-ribose chains created by PARP1 and cap them. This prevents PARP1 from further addition of ADP-ribose and thus limits the consumption of nuclear NAD(+), allowing the cell to maintain proper NAD(+) levels in both the nucleus and the mitochondria to promote proper mitochondrial respiration. Increases the expression of genes involved in redox metabolism, including SOD3. In terms of biological role, in contrast to isoform 1, does not bind poly-ADP-ribose. Represses SOD3 gene expression. This chain is Core histone macro-H2A.1, found in Homo sapiens (Human).